Reading from the N-terminus, the 244-residue chain is Uridylate kinase (244 aa).

15–18 lines the ATP pocket; the sequence is KLSG. The interval 23-28 is involved in allosteric activation by GTP; the sequence is GSEGFG. Gly57 provides a ligand contact to UMP. ATP is bound by residues Gly58 and Arg62. UMP contacts are provided by residues Asp77 and 138–145; that span reads TGNPFFTT. Positions 165, 171, and 174 each coordinate ATP.

It belongs to the UMP kinase family. Homohexamer.

The protein resides in the cytoplasm. The catalysed reaction is UMP + ATP = UDP + ADP. Its pathway is pyrimidine metabolism; CTP biosynthesis via de novo pathway; UDP from UMP (UMPK route): step 1/1. Allosterically activated by GTP. Inhibited by UTP. In terms of biological role, catalyzes the reversible phosphorylation of UMP to UDP. The polypeptide is Uridylate kinase (Aeromonas hydrophila subsp. hydrophila (strain ATCC 7966 / DSM 30187 / BCRC 13018 / CCUG 14551 / JCM 1027 / KCTC 2358 / NCIMB 9240 / NCTC 8049)).